A 375-amino-acid polypeptide reads, in one-letter code: Queuine tRNA-ribosyltransferase (375 aa).

Residue aspartate 89 is the Proton acceptor of the active site. Substrate is bound by residues 89–93 (DSGGF), aspartate 143, glutamine 187, and glycine 214. The tract at residues 245-251 (GVGKPED) is RNA binding. The active-site Nucleophile is the aspartate 264. Residues 269–273 (TRNAR) are RNA binding; important for wobble base 34 recognition. The Zn(2+) site is built by cysteine 302, cysteine 304, cysteine 307, and histidine 333.

It belongs to the queuine tRNA-ribosyltransferase family. In terms of assembly, homodimer. Within each dimer, one monomer is responsible for RNA recognition and catalysis, while the other monomer binds to the replacement base PreQ1. Zn(2+) is required as a cofactor.

The catalysed reaction is 7-aminomethyl-7-carbaguanine + guanosine(34) in tRNA = 7-aminomethyl-7-carbaguanosine(34) in tRNA + guanine. The protein operates within tRNA modification; tRNA-queuosine biosynthesis. Catalyzes the base-exchange of a guanine (G) residue with the queuine precursor 7-aminomethyl-7-deazaguanine (PreQ1) at position 34 (anticodon wobble position) in tRNAs with GU(N) anticodons (tRNA-Asp, -Asn, -His and -Tyr). Catalysis occurs through a double-displacement mechanism. The nucleophile active site attacks the C1' of nucleotide 34 to detach the guanine base from the RNA, forming a covalent enzyme-RNA intermediate. The proton acceptor active site deprotonates the incoming PreQ1, allowing a nucleophilic attack on the C1' of the ribose to form the product. After dissociation, two additional enzymatic reactions on the tRNA convert PreQ1 to queuine (Q), resulting in the hypermodified nucleoside queuosine (7-(((4,5-cis-dihydroxy-2-cyclopenten-1-yl)amino)methyl)-7-deazaguanosine). The polypeptide is Queuine tRNA-ribosyltransferase (Shigella flexneri serotype 5b (strain 8401)).